The chain runs to 340 residues: Phenylalanine--tRNA ligase alpha subunit (340 aa).

Glu-251 serves as a coordination point for Mg(2+).

This sequence belongs to the class-II aminoacyl-tRNA synthetase family. Phe-tRNA synthetase alpha subunit type 1 subfamily. Tetramer of two alpha and two beta subunits. Mg(2+) is required as a cofactor.

The protein resides in the cytoplasm. It catalyses the reaction tRNA(Phe) + L-phenylalanine + ATP = L-phenylalanyl-tRNA(Phe) + AMP + diphosphate + H(+). This Porphyromonas gingivalis (strain ATCC 33277 / DSM 20709 / CIP 103683 / JCM 12257 / NCTC 11834 / 2561) protein is Phenylalanine--tRNA ligase alpha subunit.